Reading from the N-terminus, the 176-residue chain is MKFLFDLFPIILFFVAFKVWGIFTATAVAIVATLAQVAWVAFRHRKVDTMLWVSLGVIVVFGGATLVLHDEKFIQWKPTVLYWLFAIGLLAARYAFGKNLIEKMMGKQLTLPVPVWDKLNVAWALFFAVLGVANLYVVHNFTESQWVNFKLFGTTGAMVVFIILQSLWLTKYLKDE.

6 helical membrane-spanning segments follow: residues 3–23, 24–44, 49–69, 72–92, 121–141, and 149–169; these read FLFDLFPIILFFVAFKVWGIF, TATAVAIVATLAQVAWVAFRH, TMLWVSLGVIVVFGGATLVLH, KFIQWKPTVLYWLFAIGLLAA, VAWALFFAVLGVANLYVVHNF, and FKLFGTTGAMVVFIILQSLWL.

Belongs to the YciB family.

Its subcellular location is the cell inner membrane. Functionally, plays a role in cell envelope biogenesis, maintenance of cell envelope integrity and membrane homeostasis. This is Inner membrane-spanning protein YciB from Burkholderia orbicola (strain MC0-3).